A 294-amino-acid polypeptide reads, in one-letter code: MLSIIVPSYNRKAEVPALLESLTQQTSSNFEVIIVDDCSKERVVVEQSYSFPVTVIRNETNQGAAESRNVGARTSKGDWLLFLDDDDCFMPEKCEKVLQVIEQNPNINFIYHPAKCEMVNEGFTYVTQPIEPQEISTERILLANKIGGMPMIAIKKEMFLKIGGLSTALRSLEDYDFLLKLLQEPSFTPYKINEPLTYCTFHTKRSSVSTDTTNTQKAIDYIREHYVKTVEQARNFDINASYILAYPHIMNLSRKAAKYYFDIFKKTKSIKQFIITLVILISPKLAINLKRLGK.

This sequence belongs to the glycosyltransferase 2 family.

This is an uncharacterized protein from Haemophilus influenzae (strain ATCC 51907 / DSM 11121 / KW20 / Rd).